Consider the following 450-residue polypeptide: C4-dicarboxylate transport protein (450 aa).

8 helical membrane passes run 25-45 (VVFA…YGAA), 56-76 (LIKM…IASM), 90-110 (MAYF…VANV), 162-182 (ILQV…VGDA), 200-220 (LVNI…AFTI), 234-254 (LVLT…GAVA), 319-339 (IYMT…LTLG), and 367-387 (AATL…ILGV).

Belongs to the dicarboxylate/amino acid:cation symporter (DAACS) (TC 2.A.23) family.

It localises to the cell inner membrane. Its function is as follows. Responsible for the transport of dicarboxylates such as succinate, fumarate, and malate from the periplasm across the membrane. The chain is C4-dicarboxylate transport protein from Acidovorax ebreus (strain TPSY) (Diaphorobacter sp. (strain TPSY)).